The chain runs to 324 residues: Putative GTPase PYRAB02490 (324 aa).

Residues 52 to 60 (GPPGAGKST), D194, and 229 to 231 (VAT) contribute to the GTP site.

Belongs to the SIMIBI class G3E GTPase family. ArgK/MeaB subfamily.

Its function is as follows. May have GTPase activity. May also bind and hydrolyze ATP. May function as chaperone. The protein is Putative GTPase PYRAB02490 of Pyrococcus abyssi (strain GE5 / Orsay).